The sequence spans 205 residues: LexA repressor (205 aa).

Residues 28 to 48 (RAEIARRLGFKSANAAEEHLK) constitute a DNA-binding region (H-T-H motif). Active-site for autocatalytic cleavage activity residues include S122 and K159.

It belongs to the peptidase S24 family. Homodimer.

It catalyses the reaction Hydrolysis of Ala-|-Gly bond in repressor LexA.. Represses a number of genes involved in the response to DNA damage (SOS response), including recA and lexA. In the presence of single-stranded DNA, RecA interacts with LexA causing an autocatalytic cleavage which disrupts the DNA-binding part of LexA, leading to derepression of the SOS regulon and eventually DNA repair. The chain is LexA repressor from Shewanella loihica (strain ATCC BAA-1088 / PV-4).